The following is a 226-amino-acid chain: 2-C-methyl-D-erythritol 4-phosphate cytidylyltransferase (226 aa).

It belongs to the IspD/TarI cytidylyltransferase family. IspD subfamily.

The catalysed reaction is 2-C-methyl-D-erythritol 4-phosphate + CTP + H(+) = 4-CDP-2-C-methyl-D-erythritol + diphosphate. It participates in isoprenoid biosynthesis; isopentenyl diphosphate biosynthesis via DXP pathway; isopentenyl diphosphate from 1-deoxy-D-xylulose 5-phosphate: step 2/6. In terms of biological role, catalyzes the formation of 4-diphosphocytidyl-2-C-methyl-D-erythritol from CTP and 2-C-methyl-D-erythritol 4-phosphate (MEP). This chain is 2-C-methyl-D-erythritol 4-phosphate cytidylyltransferase, found in Clostridium beijerinckii (strain ATCC 51743 / NCIMB 8052) (Clostridium acetobutylicum).